Here is an 828-residue protein sequence, read N- to C-terminus: Glycerol-3-phosphate acyltransferase 1, mitochondrial (828 aa).

Topologically, residues 1 to 87 (MDESALTLGT…FFNPSIPSLG (87 aa)) are cytoplasmic. An important for mitochondrial localization region spans residues 80 to 120 (NPSIPSLGLRNVIYINETHTRHRGWLARRLSYVLFIQERDV). An intramembrane segment occupies 88–118 (LRNVIYINETHTRHRGWLARRLSYVLFIQER). Residues 119-828 (DVHKGMFATN…LEYILSFVVL (710 aa)) are Cytoplasmic-facing. The HXXXXD motif motif lies at 230 to 235 (HRSHID). The CoA site is built by Arg-278, Arg-279, Lys-288, Arg-293, and Arg-328. The residue at position 380 (Ser-380) is a Phosphoserine. The tract at residues 435–455 (SRPSDAADEGRDTSINESRNA) is disordered. Residues 442–455 (DEGRDTSINESRNA) are compositionally biased toward basic and acidic residues. Arg-462 contributes to the CoA binding site. Phosphoserine is present on residues Ser-688 and Ser-695. 2 positions are modified to N6-acetyllysine: Lys-780 and Lys-784.

The protein belongs to the GPAT/DAPAT family.

The protein resides in the mitochondrion outer membrane. The catalysed reaction is sn-glycerol 3-phosphate + an acyl-CoA = a 1-acyl-sn-glycero-3-phosphate + CoA. It catalyses the reaction (9Z,12Z)-octadecadienoyl-CoA + sn-glycerol 3-phosphate = 1-(9Z,12Z)-octadecadienoyl-sn-glycero-3-phosphate + CoA. It carries out the reaction sn-glycerol 3-phosphate + (9Z)-octadecenoyl-CoA = 1-(9Z-octadecenoyl)-sn-glycero-3-phosphate + CoA. The enzyme catalyses sn-glycerol 3-phosphate + octadecanoyl-CoA = 1-octadecanoyl-sn-glycero-3-phosphate + CoA. The catalysed reaction is sn-glycerol 3-phosphate + hexadecanoyl-CoA = 1-hexadecanoyl-sn-glycero-3-phosphate + CoA. It catalyses the reaction dodecanoyl-CoA + sn-glycerol 3-phosphate = 1-dodecanoyl-sn-glycerol 3-phosphate + CoA. It carries out the reaction 1-acyl-sn-glycero-3-phospho-(1'-sn-glycerol) + an acyl-CoA = a 1,2-diacyl-sn-glycero-3-phospho-(1'-sn-glycerol) + CoA. Its pathway is phospholipid metabolism; CDP-diacylglycerol biosynthesis; CDP-diacylglycerol from sn-glycerol 3-phosphate: step 1/3. Functionally, mitochondrial membrane protein that catalyzes the essential first step of biosynthesis of glycerolipids such as triglycerides, phosphatidic acids and lysophosphatidic acids. Esterifies acyl-group from acyl-coenzyme A (acyl-CoA) to the sn-1 position of glycerol-3-phosphate, to produce lysophosphatidic acid. Has a narrow hydrophobic binding cleft that selects for a linear acyl chain. Catalytic activity is higher for substrates with a 16-carbon acyl chain. The chain is Glycerol-3-phosphate acyltransferase 1, mitochondrial from Homo sapiens (Human).